The sequence spans 309 residues: tRNA dimethylallyltransferase (309 aa).

10–17 (GPTAVGKT) is a binding site for ATP. Residue 12–17 (TAVGKT) participates in substrate binding. The segment at 35-38 (DSMQ) is interaction with substrate tRNA.

Belongs to the IPP transferase family. Monomer. Mg(2+) is required as a cofactor.

The catalysed reaction is adenosine(37) in tRNA + dimethylallyl diphosphate = N(6)-dimethylallyladenosine(37) in tRNA + diphosphate. Functionally, catalyzes the transfer of a dimethylallyl group onto the adenine at position 37 in tRNAs that read codons beginning with uridine, leading to the formation of N6-(dimethylallyl)adenosine (i(6)A). This chain is tRNA dimethylallyltransferase, found in Clostridium botulinum (strain Eklund 17B / Type B).